The primary structure comprises 193 residues: MNALIDNPEALASGYLAMAQVFSYPDAGAWSRLTERGLVDPALTHETLEAEYLAAFEMGGGKATVSLYEGQNRPDLGRDGILQELLRFYEFFDAQLSEDDREYPDHLVTELEFLAWLCLQEHAAVRDGRDAEPFRRAARDFLDRHLAAWLPEFRRRLEATDSAYAQYGPALGELVEAHRSRLGEQAPQLGELQ.

Belongs to the type II DMSO reductase enzyme chaperone family.

It localises to the cytoplasm. May function as a system-specific chaperone protein essential for the assembly of an active selenate reductase SerABC. This is Selenate reductase assembly chaperone protein from Thauera selenatis.